A 313-amino-acid polypeptide reads, in one-letter code: Ribosomal RNA small subunit methyltransferase H (313 aa).

S-adenosyl-L-methionine is bound by residues 35 to 37, D55, F79, D100, and Q107; that span reads GGH.

It belongs to the methyltransferase superfamily. RsmH family.

It is found in the cytoplasm. The catalysed reaction is cytidine(1402) in 16S rRNA + S-adenosyl-L-methionine = N(4)-methylcytidine(1402) in 16S rRNA + S-adenosyl-L-homocysteine + H(+). Its function is as follows. Specifically methylates the N4 position of cytidine in position 1402 (C1402) of 16S rRNA. This is Ribosomal RNA small subunit methyltransferase H from Burkholderia vietnamiensis (strain G4 / LMG 22486) (Burkholderia cepacia (strain R1808)).